The chain runs to 165 residues: Phosphopantetheine adenylyltransferase (165 aa).

A substrate-binding site is contributed by Thr10. Residues 10–11 (TF) and His18 contribute to the ATP site. Lys42, Leu75, and Arg89 together coordinate substrate. ATP-binding positions include 90–92 (GLR), Glu100, and 125–131 (YTYVASS).

Belongs to the bacterial CoaD family. Homohexamer. It depends on Mg(2+) as a cofactor.

It localises to the cytoplasm. It catalyses the reaction (R)-4'-phosphopantetheine + ATP + H(+) = 3'-dephospho-CoA + diphosphate. Its pathway is cofactor biosynthesis; coenzyme A biosynthesis; CoA from (R)-pantothenate: step 4/5. Reversibly transfers an adenylyl group from ATP to 4'-phosphopantetheine, yielding dephospho-CoA (dPCoA) and pyrophosphate. This chain is Phosphopantetheine adenylyltransferase, found in Chlorobium phaeobacteroides (strain BS1).